A 332-amino-acid polypeptide reads, in one-letter code: Cell growth regulator with RING finger domain protein 1 (332 aa).

An RING-type zinc finger spans residues 274–309 (CVVCQNGGVNWVLLPCRHACLCDSCVRYFKQCPMCR).

It localises to the nucleus. Its subcellular location is the endoplasmic reticulum. Its function is as follows. Able to inhibit growth in several cell lines. The chain is Cell growth regulator with RING finger domain protein 1 (Cgrrf1) from Mus musculus (Mouse).